The following is a 66-amino-acid chain: Early E3 7.7 kDa protein (66 aa).

2 N-linked (GlcNAc...) asparagine; by host glycosylation sites follow: Asn7 and Asn24. The chain crosses the membrane as a helical span at residues 44–64 (ITILIVIGILILSVILYFLFS).

It is found in the host nucleus membrane. The polypeptide is Early E3 7.7 kDa protein (Human adenovirus B serotype 7 (HAdV-7)).